The primary structure comprises 340 residues: Guanine nucleotide-binding protein G(I)/G(S)/G(T) subunit beta-1 (340 aa).

S2 is subject to N-acetylserine. Phosphoserine is present on S2. WD repeat units follow at residues 46–94, 95–140, 141–181, 182–223, 224–267, 268–309, and 310–340; these read RTRR…HAIP, LRSS…RELA, GHTG…TTFT, GHTG…QTFT, GHES…YSHD, NIIC…GVLA, and GHDNRVSCLGVTDDGMAVATGSWDSFLKIWN. H266 is subject to Phosphohistidine.

The protein belongs to the WD repeat G protein beta family. G proteins are composed of 3 units, alpha, beta and gamma. The heterodimer formed by GNB1 and GNG2 interacts with ARHGEF5. The heterodimer formed by GNB1 and GNG2 interacts with GRK2. Forms a complex with GNAO1 and GNG3. Interacts with ARHGEF18 and RASD2. Forms complexes with TAS2R14 and G-proteins; these complexes play a role in the perception of bitterness. Component of the TAS2R14-GNAI1 complex, consisting of TAS2R14, GNAI1, GNB1 and GNG2. Component of the TAS2R14-GNAT3 complex, consisting of TAS2R14, GNAT3, GNB1 and GNG2. Component of the TAS2R14-GNAS2 complex, consisting of TAS2R14, GNAS2, GNB1 and GNG2. In terms of processing, phosphorylation at His-266 by NDKB contributes to G protein activation by increasing the high energetic phosphate transfer onto GDP.

In terms of biological role, guanine nucleotide-binding proteins (G proteins) are involved as a modulator or transducer in various transmembrane signaling systems. The beta and gamma chains are required for the GTPase activity, for replacement of GDP by GTP, and for G protein-effector interaction. The polypeptide is Guanine nucleotide-binding protein G(I)/G(S)/G(T) subunit beta-1 (GNB1) (Cricetulus griseus (Chinese hamster)).